Reading from the N-terminus, the 184-residue chain is Shikimate kinase (184 aa).

An ATP-binding site is contributed by 12 to 17 (GSGKST). Serine 16 is a binding site for Mg(2+). Substrate-binding residues include aspartate 34, arginine 58, and glycine 80. Arginine 117 serves as a coordination point for ATP. Residue arginine 136 coordinates substrate. An ATP-binding site is contributed by arginine 153. The interval 164 to 184 (SRLDDPTPNTSPSSTASGAAT) is disordered. Positions 169–184 (PTPNTSPSSTASGAAT) are enriched in low complexity.

It belongs to the shikimate kinase family. In terms of assembly, monomer. The cofactor is Mg(2+).

The protein localises to the cytoplasm. The enzyme catalyses shikimate + ATP = 3-phosphoshikimate + ADP + H(+). Its pathway is metabolic intermediate biosynthesis; chorismate biosynthesis; chorismate from D-erythrose 4-phosphate and phosphoenolpyruvate: step 5/7. Its function is as follows. Catalyzes the specific phosphorylation of the 3-hydroxyl group of shikimic acid using ATP as a cosubstrate. In Mycobacterium ulcerans (strain Agy99), this protein is Shikimate kinase.